Here is a 396-residue protein sequence, read N- to C-terminus: Putative glutamate--cysteine ligase 2-2 (396 aa).

This sequence belongs to the glutamate--cysteine ligase type 2 family. YbdK subfamily.

The catalysed reaction is L-cysteine + L-glutamate + ATP = gamma-L-glutamyl-L-cysteine + ADP + phosphate + H(+). ATP-dependent carboxylate-amine ligase which exhibits weak glutamate--cysteine ligase activity. The chain is Putative glutamate--cysteine ligase 2-2 from Mycolicibacterium smegmatis (strain ATCC 700084 / mc(2)155) (Mycobacterium smegmatis).